The chain runs to 101 residues: Apolipoprotein C-II (101 aa).

Positions 1-22 (MGTRYFLVGFLILLVLGFEVQG) are cleaved as a signal peptide. Residues 66-74 (AVDEKIRDI) are lipid binding. A lipoprotein lipase cofactor region spans residues 78 to 101 (STAAVTTYAGIITDQVFSVLSGKD).

Belongs to the apolipoprotein C2 family. Proapolipoprotein C-II is synthesized as a sialic acid containing glycoprotein which is subsequently desialylated prior to its proteolytic processing. Post-translationally, proapolipoprotein C-II undergoes proteolytic cleavage of its N-terminal hexapeptide to generate apolipoprotein C-II. In bovine, proapolipoprotein C-II was found to be the minor form whereas apolipoprotein C-II was found to be the major form in plasma.

It is found in the secreted. Its function is as follows. Component of chylomicrons, very low-density lipoproteins (VLDL), low-density lipoproteins (LDL), and high-density lipoproteins (HDL) in plasma. Plays an important role in lipoprotein metabolism as an activator of lipoprotein lipase. Both proapolipoprotein C-II and apolipoprotein C-II can activate lipoprotein lipase. The chain is Apolipoprotein C-II (APOC2) from Bos taurus (Bovine).